A 111-amino-acid polypeptide reads, in one-letter code: Large ribosomal subunit protein uL24 (111 aa).

Belongs to the universal ribosomal protein uL24 family. Part of the 50S ribosomal subunit.

Its function is as follows. One of two assembly initiator proteins, it binds directly to the 5'-end of the 23S rRNA, where it nucleates assembly of the 50S subunit. In terms of biological role, one of the proteins that surrounds the polypeptide exit tunnel on the outside of the subunit. The polypeptide is Large ribosomal subunit protein uL24 (Myxococcus xanthus (strain DK1622)).